Reading from the N-terminus, the 305-residue chain is Probable 5-dehydro-4-deoxyglucarate dehydratase (305 aa).

This sequence belongs to the DapA family.

The catalysed reaction is 5-dehydro-4-deoxy-D-glucarate + H(+) = 2,5-dioxopentanoate + CO2 + H2O. Its pathway is carbohydrate acid metabolism; D-glucarate degradation; 2,5-dioxopentanoate from D-glucarate: step 2/2. The protein is Probable 5-dehydro-4-deoxyglucarate dehydratase of Xanthomonas campestris pv. campestris (strain B100).